Here is a 1321-residue protein sequence, read N- to C-terminus: Probable serine/threonine-protein kinase fnkE (1321 aa).

FNIP repeat units follow at residues 108–149, 150–191, 192–233, and 255–296; these read YNQL…NLSS, YNQP…DLSS, YNKL…DLSS, and YNKL…DISS. The 301-residue stretch at 295 to 595 folds into the Protein kinase 1 domain; it reads SSYNQLLTPG…YNYVIKDSIM (301 aa). ATP contacts are provided by residues 301-309 and lysine 325; that span reads LTPGTLSNN. The active-site Proton acceptor is the aspartate 465. 2 FNIP repeats span residues 654–696 and 741–783; these read FNHP…FNKF and FNQP…LGSN. Residues 860-1128 form the Protein kinase 2 domain; sequence WEIISTLGSG…EGDSVFEKYL (269 aa). ATP is bound by residues 866–874 and lysine 895; that span reads LGSGNFGKV. Aspartate 990 (proton acceptor) is an active-site residue. FNIP repeat units lie at residues 1160–1202 and 1224–1268; these read YNQM…LGNE and FNFT…LGSN.

It belongs to the protein kinase superfamily. STE Ser/Thr protein kinase family. It depends on Mg(2+) as a cofactor.

It catalyses the reaction L-seryl-[protein] + ATP = O-phospho-L-seryl-[protein] + ADP + H(+). It carries out the reaction L-threonyl-[protein] + ATP = O-phospho-L-threonyl-[protein] + ADP + H(+). This chain is Probable serine/threonine-protein kinase fnkE, found in Dictyostelium discoideum (Social amoeba).